Here is a 197-residue protein sequence, read N- to C-terminus: Guanylate kinase (197 aa).

Residues 6 to 191 form the Guanylate kinase-like domain; sequence SKLIILSGPS…CVAQIEKIIS (186 aa). 13–20 lines the ATP pocket; that stretch reads GPSGVGKG.

This sequence belongs to the guanylate kinase family.

The protein resides in the cytoplasm. It catalyses the reaction GMP + ATP = GDP + ADP. Functionally, essential for recycling GMP and indirectly, cGMP. The protein is Guanylate kinase of Mesomycoplasma hyopneumoniae (strain 7448) (Mycoplasma hyopneumoniae).